A 208-amino-acid polypeptide reads, in one-letter code: Pyridoxal 5'-phosphate synthase subunit PdxT (208 aa).

L-glutamine is bound at residue 46-48; sequence GES. Catalysis depends on C78, which acts as the Nucleophile. Residues R105 and 156 to 157 each bind L-glutamine; that span reads IR. Residues H192 and E194 each act as charge relay system in the active site.

Belongs to the glutaminase PdxT/SNO family. In terms of assembly, in the presence of PdxS, forms a dodecamer of heterodimers. Only shows activity in the heterodimer.

The catalysed reaction is aldehydo-D-ribose 5-phosphate + D-glyceraldehyde 3-phosphate + L-glutamine = pyridoxal 5'-phosphate + L-glutamate + phosphate + 3 H2O + H(+). It catalyses the reaction L-glutamine + H2O = L-glutamate + NH4(+). The protein operates within cofactor biosynthesis; pyridoxal 5'-phosphate biosynthesis. In terms of biological role, catalyzes the hydrolysis of glutamine to glutamate and ammonia as part of the biosynthesis of pyridoxal 5'-phosphate. The resulting ammonia molecule is channeled to the active site of PdxS. This chain is Pyridoxal 5'-phosphate synthase subunit PdxT, found in Bifidobacterium adolescentis (strain ATCC 15703 / DSM 20083 / NCTC 11814 / E194a).